A 305-amino-acid chain; its full sequence is Sulfate adenylyltransferase subunit 2 (305 aa).

This sequence belongs to the PAPS reductase family. CysD subfamily. Heterodimer composed of CysD, the smaller subunit, and CysN.

The catalysed reaction is sulfate + ATP + H(+) = adenosine 5'-phosphosulfate + diphosphate. The protein operates within sulfur metabolism; hydrogen sulfide biosynthesis; sulfite from sulfate: step 1/3. Functionally, with CysN forms the ATP sulfurylase (ATPS) that catalyzes the adenylation of sulfate producing adenosine 5'-phosphosulfate (APS) and diphosphate, the first enzymatic step in sulfur assimilation pathway. APS synthesis involves the formation of a high-energy phosphoric-sulfuric acid anhydride bond driven by GTP hydrolysis by CysN coupled to ATP hydrolysis by CysD. The chain is Sulfate adenylyltransferase subunit 2 from Azotobacter vinelandii (strain DJ / ATCC BAA-1303).